Consider the following 215-residue polypeptide: ER lumen protein-retaining receptor 3 (215 aa).

The Lumenal segment spans residues 1–4 (MNIF). Residues 5–24 (RLSGDVCHLIAIIILFLKIW) traverse the membrane as a helical segment. Residues 25 to 32 (RSKSCAGI) are Cytoplasmic-facing. A helical membrane pass occupies residues 33–52 (SGKSQVLFALVFTTRYLDLF). The interaction with the K-D-E-L motif on target proteins stretch occupies residues 47–48 (RY). Over 53–58 (TSYISA) the chain is Lumenal. Residues 59–79 (YNTVMKVVYLLLAYSTVGLIF) traverse the membrane as a helical segment. At 80-92 (FRFRNSYDSESDS) the chain is on the cytoplasmic side. A helical membrane pass occupies residues 93-110 (FRVEFLLVPVAGLSFLEN). Topologically, residues 111-116 (YAFTPL) are lumenal. Residues 117 to 135 (EILWTFSIYLESVAILPQL) form a helical membrane-spanning segment. Topologically, residues 136 to 149 (FMITKTGEAESITA) are cytoplasmic. Residues 150–168 (HYLLFLGLYRALYLANWLW) traverse the membrane as a helical segment. Residues 159–169 (RALYLANWLWR) are interaction with the K-D-E-L motif on target proteins. At 169–178 (RFHTEGFYDQ) the chain is on the lumenal side. A helical membrane pass occupies residues 179 to 199 (IAVVSGVVQTIFYCDFFYLYF). Topologically, residues 200–215 (TRVLRGSGKMSLPMPV) are cytoplasmic. Residues 204–208 (RGSGK) form an important for recycling of cargo proteins with the sequence motif K-D-E-L from the Golgi to the endoplasmic reticulum region.

Belongs to the ERD2 family.

Its subcellular location is the endoplasmic reticulum membrane. The protein resides in the golgi apparatus membrane. It is found in the cytoplasmic vesicle. The protein localises to the COPI-coated vesicle membrane. Receptor for the C-terminal sequence motif K-D-E-L that is present on endoplasmic reticulum resident proteins and that mediates their recycling from the Golgi back to the endoplasmic reticulum. The polypeptide is ER lumen protein-retaining receptor 3 (kdelr3) (Danio rerio (Zebrafish)).